A 573-amino-acid chain; its full sequence is N(2)-(2-carboxyethyl)arginine synthase (573 aa).

Substrate-binding residues include Tyr271 and Asp301. Residue 410–413 (IGFF) participates in thiamine diphosphate binding. Residue 414 to 415 (RH) participates in substrate binding. 436–438 (SSF) is a thiamine diphosphate binding site. Asp463 contributes to the Mg(2+) binding site. Residues 464 to 465 (GG), 490 to 495 (NDTNGL), and Tyr561 contribute to the thiamine diphosphate site. The Mg(2+) site is built by Asn490 and Thr492. Position 571 (Leu571) interacts with substrate.

As to quaternary structure, homotetramer; dimer of dimers. Mg(2+) is required as a cofactor. Thiamine diphosphate serves as cofactor.

The enzyme catalyses D-glyceraldehyde 3-phosphate + L-arginine = N(2)-(2-carboxyethyl)-L-arginine + phosphate + H(+). Functionally, involved in the biosynthesis of the beta-lactamase inhibitor, clavulanic acid. Catalyzes the thiamine diphosphate (ThDP) dependent condensation of D-glyceraldehyde-3-phosphate (D-G3P) with L-arginine to yield the beta-amino acid, N2-(2-carboxyethyl)arginine (CEA) via a beta-elimination resulting in the formation of an enol which undergoes a second elimination to generate the alpha,beta-unsaturated acryloyl-ThDP. The sequence is that of N(2)-(2-carboxyethyl)arginine synthase from Streptomyces clavuligerus.